The chain runs to 801 residues: Protocadherin beta-8 (801 aa).

The signal sequence occupies residues 1-29 (MEASGKLICRQRQVLFSFLLLGLSLAGAA). Residues 30–691 (EPRSYSVVEE…GQADSLTVYL (662 aa)) are Extracellular-facing. Cadherin domains are found at residues 36–134 (VVEE…SPVF), 139–243 (MLVK…APEF), 248–348 (YRVQ…APEV), 353–452 (FTSP…APAF), and 457–562 (YTLF…SPFV). An intrachain disulfide couples C97 to C103. Residues N419 and N437 are each glycosylated (N-linked (GlcNAc...) asparagine). N-linked (GlcNAc...) asparagine glycosylation occurs at N568. The Cadherin 6 domain maps to 569 to 672 (GSAPCTELVP…LVDGFSQPYL (104 aa)). A helical transmembrane segment spans residues 692-710 (VVALASVSSLFLFSVLLFV). Residues 711 to 801 (AVLLCRRSRA…NGFGFSLQLK (91 aa)) are Cytoplasmic-facing.

In terms of assembly, forms homodimers in trans (molecules expressed by two different cells). Forms promiscuous heterodimers in cis (at the plasma membrane of the same cell) with other protocadherins.

It is found in the cell membrane. Functionally, calcium-dependent cell-adhesion protein involved in cells self-recognition and non-self discrimination. Thereby, it is involved in the establishment and maintenance of specific neuronal connections in the brain. The protein is Protocadherin beta-8 of Homo sapiens (Human).